An 86-amino-acid polypeptide reads, in one-letter code: MKTLLLTLVVVAIVCLDLGYTLTCLICPEKDCQKVHTCRNEEKICVKRSYDKNQLGWRAQRGCAVSCPKAKPNETVQCCSTDKCNK.

Residues 1–23 (MKTLLLTLVVVAIVCLDLGYTLT) form the signal peptide. Disulfide bonds link Cys24–Cys45, Cys27–Cys32, Cys38–Cys63, Cys67–Cys78, and Cys79–Cys84.

The protein belongs to the three-finger toxin family. Ancestral subfamily. Orphan group II sub-subfamily. In terms of tissue distribution, expressed by the venom gland.

It is found in the secreted. Functionally, binds with low affinity to muscular (alpha-1-beta-1-delta-epsilon/CHRNA1-CHRNB1-CHRND-CHRNE) and very low affinity to neuronal (alpha-7/CHRNA7) nicotinic acetylcholine receptor (nAChR). The polypeptide is Weak toxin 2 (Bungarus candidus (Malayan krait)).